The primary structure comprises 172 residues: Probable calcium-binding protein CML28 (172 aa).

EF-hand domains lie at 1 to 36 (MDSTELRKVFKMFDKNGDGRITKKELGESFKNFGIF), 37 to 72 (IPDDELDATMDKIDANGDGCVDVEEFGLLYRSILGD), 95 to 130 (DEDEGMREAFNVFDQNGDGFITVDELRSVLSSLGLK), and 133 to 168 (RTADDCRRMISMVDADGDGRVDFKEFKQMMRGGGFA). Residues Asp14, Asn16, Asp18, Arg20, Glu25, Asp50, Asn52, Asp54, Cys56, Glu61, Asp108, Asn110, Asp112, Glu119, Asp146, Asp148, Asp150, Arg152, and Glu157 each coordinate Ca(2+).

In terms of biological role, potential calcium sensor. The chain is Probable calcium-binding protein CML28 (CML28) from Oryza sativa subsp. japonica (Rice).